The chain runs to 928 residues: Sodium/calcium exchanger 3 (928 aa).

Residues 1–30 form the signal peptide; that stretch reads MAWLRLQPLTSAFLHFGLVTFVLFLNCLRA. Topologically, residues 31–73 are extracellular; sequence EAGDSGDVPSAGQNNESCSGSSDCKEGVILPIWYPENPSLGDK. N-linked (GlcNAc...) asparagine glycosylation is present at N45. Residues 74 to 94 traverse the membrane as a helical segment; the sequence is IARVIVYFVALIYMFLGVSII. Over 95-147 the chain is Cytoplasmic; the sequence is ADRFMASIEVITSQEREVTIKKPNGETSTTTIRVWNETVSNLTLMALGSSAPE. A helical membrane pass occupies residues 148–168; sequence ILLSLIEVCGHGFIAGDLGPS. T169 is a topological domain (extracellular). Residues 170 to 190 form a helical membrane-spanning segment; sequence IVGSAAFNMFIIIGICVYVIP. Topologically, residues 191-201 are cytoplasmic; it reads DGETRKIKHLR. The chain crosses the membrane as a helical span at residues 202 to 222; the sequence is VFFVTAAWSIFAYIWLYMILA. At 223–230 the chain is on the extracellular side; it reads VFSPGVVQ. Residues 231-251 form a helical membrane-spanning segment; the sequence is VWEGLLTLFFFPVCVLLAWVA. Residues 252 to 727 are Cytoplasmic-facing; that stretch reads DKRLLFYKYM…DESGEERLPS (476 aa). Residues 253-272 are putative calmodulin-binding region; sequence KRLLFYKYMHKKYRTDKHRG. Calx-beta domains are found at residues 390–485 and 519–618; these read EPED…VRLS and ATVT…VIEM. The Ca(2+) site is built by E409, D445, D470, D471, I473, E475, E478, D525, D526, D527, E543, D579, D605, and E673. A helical membrane pass occupies residues 728 to 748; that stretch reads CFDYVMHFLTVFWKVLFACVP. Topologically, residues 749–755 are extracellular; sequence PTEYCHG. The chain crosses the membrane as a helical span at residues 756–776; that stretch reads WACFVVSILIIGMLTAIIGDL. At 777 to 779 the chain is on the cytoplasmic side; that stretch reads ASH. Residues 780–800 form a helical membrane-spanning segment; the sequence is FGCTIGLKDSVTAVVFVAFGT. Residues 801–829 lie on the Extracellular side of the membrane; that stretch reads SVPDTFASKAAALQDVYADASIGNVTGSN. An N-linked (GlcNAc...) asparagine glycan is attached at N824. The helical transmembrane segment at 830-850 threads the bilayer; it reads AVNVFLGIGLAWSVAAIYWAM. The Cytoplasmic portion of the chain corresponds to 851–861; that stretch reads QGQEFHVSAGT. Residues 862 to 882 form a helical membrane-spanning segment; the sequence is LAFSVTLFTIFAFVCLSVLLY. Topologically, residues 883-904 are extracellular; sequence RRRPHLGGELGGPRGCKLATTW. A helical transmembrane segment spans residues 905–925; the sequence is LFVSLWLLYILFATLEAYCYI. At 926-928 the chain is on the cytoplasmic side; the sequence is KGF.

It belongs to the Ca(2+):cation antiporter (CaCA) (TC 2.A.19) family. SLC8 subfamily. As to quaternary structure, interacts with AKAP1. Detected in gray and white matter in the spinal cord. Detected in hippocampus neurons. Detected in brain cortex neurons. Detected in skeletal muscle (at protein level). Isoform 1 and isoform 2 are highly expressed in brain; levels are higher for isoform 2. Isoform 1 and isoform 2 are detected in soleus muscle; levels are higher for isoform 1. Detected in gastrocnemius muscle.

The protein resides in the cell membrane. It is found in the perikaryon. Its subcellular location is the cell projection. The protein localises to the dendrite. It localises to the dendritic spine. The protein resides in the sarcolemma. It is found in the cytoplasm. Its subcellular location is the sarcoplasm. The protein localises to the cell junction. It localises to the mitochondrion outer membrane. The protein resides in the perinuclear region. It is found in the endoplasmic reticulum membrane. It carries out the reaction Ca(2+)(in) + 3 Na(+)(out) = Ca(2+)(out) + 3 Na(+)(in). Its activity is regulated as follows. Calcium transport is stimulated by cytoplasmic Ca(2+) and is inhibited by Na(+). Isoform 1 is more sensitive to stimulation by Ca(2+) than isoform 2. Isoform 2 is more sensitive to inactivation by Na(+). In terms of biological role, mediates the electrogenic exchange of Ca(2+) against Na(+) ions across the cell membrane, and thereby contributes to the regulation of cytoplasmic Ca(2+) levels and Ca(2+)-dependent cellular processes. Contributes to cellular Ca(2+) homeostasis in excitable cells, both in muscle and in brain. In a first phase, voltage-gated channels mediate the rapid increase of cytoplasmic Ca(2+) levels due to release of Ca(2+) stores from the endoplasmic reticulum. SLC8A3 mediates the export of Ca(2+) from the cell during the next phase, so that cytoplasmic Ca(2+) levels rapidly return to baseline. Contributes to Ca(2+) transport during excitation-contraction coupling in muscle. In neurons, contributes to the rapid decrease of cytoplasmic Ca(2+) levels back to baseline after neuronal activation, and thereby contributes to modulate synaptic plasticity, learning and memory. Required for normal oligodendrocyte differentiation and for normal myelination. Mediates Ca(2+) efflux from mitochondria and contributes to mitochondrial Ca(2+) ion homeostasis. Isoform 1 displays higher calcium exchanger activity than isoform 2, probably because isoform 1 has a lower threshold for activation by cytoplasmic Ca(2+). This is Sodium/calcium exchanger 3 from Mus musculus (Mouse).